A 435-amino-acid chain; its full sequence is MDLKIFDRMESEVRGYIRSFPVIFSQARGSLLIDEEGNEYIDFFSGAGTLNYGHNNPVFKERLLEYLHSDGVVHGLDMATSAKKRFLETVDRVLLKPRNWQYTLQFTGPTGTNAVEAALKLARQVKGRSNIISFTHGFHGVSGGSLAATANAKFRDAAGVSLGNTTFMPYDGYFGPDVDTIAYIERMLDDPSSGLDKPAAVIVETVQGEGGVNVATLRWLKDLQKLCRRHDMLMIVDDIQVGCGRTGSFFSFEAAGIQPDIITLSKSLSGFGLPMSLVLMKPELDVWKPGAHSGTFRGNNLAFVTATQALETYWSSDAFSNEVQRKERLVRDWLENLAHSYPNAGLAVRGRGLIQGLVATAEPELANRIARKAFERGVVIETSGAQDEVLKLLPALTIEDELLTRGLDLIEASVADALSEEQPAAQVLKFGGKRR.

Lys-266 carries the N6-(pyridoxal phosphate)lysine modification.

It belongs to the class-III pyridoxal-phosphate-dependent aminotransferase family. The cofactor is pyridoxal 5'-phosphate.

It catalyses the reaction L-2,4-diaminobutanoate + 2-oxoglutarate = L-aspartate 4-semialdehyde + L-glutamate. It participates in amine and polyamine biosynthesis; ectoine biosynthesis; L-ectoine from L-aspartate 4-semialdehyde: step 1/3. Functionally, catalyzes reversively the conversion of L-aspartate beta-semialdehyde (ASA) to L-2,4-diaminobutyrate (DABA) by transamination with L-glutamate. This chain is Diaminobutyrate--2-oxoglutarate transaminase (ectB), found in Bordetella bronchiseptica (strain ATCC BAA-588 / NCTC 13252 / RB50) (Alcaligenes bronchisepticus).